Reading from the N-terminus, the 130-residue chain is Small ribosomal subunit protein uS11 (130 aa).

The protein belongs to the universal ribosomal protein uS11 family. In terms of assembly, part of the 30S ribosomal subunit. Interacts with proteins S7 and S18. Binds to IF-3.

In terms of biological role, located on the platform of the 30S subunit, it bridges several disparate RNA helices of the 16S rRNA. Forms part of the Shine-Dalgarno cleft in the 70S ribosome. The chain is Small ribosomal subunit protein uS11 from Thermoanaerobacter sp. (strain X514).